Reading from the N-terminus, the 192-residue chain is Thymidylate kinase (192 aa).

7–14 (GIDCVGKS) is a binding site for ATP.

It belongs to the thymidylate kinase family.

It catalyses the reaction dTMP + ATP = dTDP + ADP. In terms of biological role, phosphorylation of dTMP to form dTDP in both de novo and salvage pathways of dTTP synthesis. The polypeptide is Thymidylate kinase (Campylobacter jejuni subsp. jejuni serotype O:23/36 (strain 81-176)).